Reading from the N-terminus, the 149-residue chain is Probable glycine cleavage system H protein 2 (149 aa).

One can recognise a Lipoyl-binding domain in the interval 32–114; it reads IAVVGITDLA…YGQGWIAKIK (83 aa). Residue lysine 73 is modified to N6-lipoyllysine.

Belongs to the GcvH family. The glycine cleavage system is composed of four proteins: P, T, L and H. The cofactor is (R)-lipoate.

The glycine cleavage system catalyzes the degradation of glycine. The H protein shuttles the methylamine group of glycine from the P protein to the T protein. This is Probable glycine cleavage system H protein 2 from Sulfolobus acidocaldarius (strain ATCC 33909 / DSM 639 / JCM 8929 / NBRC 15157 / NCIMB 11770).